The following is a 799-amino-acid chain: Putative aconitate hydratase, mitochondrial (799 aa).

The N-terminal 32 residues, 1 to 32 (MVRQLVWQRATASRRLAPKCLSPQQLFARRGL), are a transit peptide targeting the mitochondrion. Substrate-binding positions include Gln-108 and 201–203 (DSH). Cys-399, Cys-462, and Cys-465 together coordinate [4Fe-4S] cluster. Residues Arg-489 and Arg-494 each contribute to the substrate site. Positions 538 to 564 (KFRPPQGSDLPSAGFADGNPALQPSAG) are disordered. 685–686 (AR) provides a ligand contact to substrate.

It belongs to the aconitase/IPM isomerase family.

The protein localises to the mitochondrion. In terms of biological role, has no detectable activity towards cis-acontiate or cis-homoaconitate. This Aspergillus fumigatus (strain ATCC MYA-4609 / CBS 101355 / FGSC A1100 / Af293) (Neosartorya fumigata) protein is Putative aconitate hydratase, mitochondrial (acoB).